The primary structure comprises 454 residues: Metacaspase-1A (454 aa).

Positions methionine 1 to histidine 16 are enriched in gly residues. Residues methionine 1–histidine 129 are disordered. Low complexity-rich tracts occupy residues tyrosine 38 to asparagine 47, tyrosine 59 to glutamine 80, glycine 88 to arginine 101, and glycine 109 to glycine 120. Residues histidine 244 and cysteine 300 contribute to the active site.

The protein belongs to the peptidase C14B family.

Its function is as follows. Involved in cell death (apoptosis). This is Metacaspase-1A (casA) from Neurospora crassa (strain ATCC 24698 / 74-OR23-1A / CBS 708.71 / DSM 1257 / FGSC 987).